The primary structure comprises 360 residues: Histidinol-phosphate aminotransferase (360 aa).

Lys218 carries the N6-(pyridoxal phosphate)lysine modification.

The protein belongs to the class-II pyridoxal-phosphate-dependent aminotransferase family. Histidinol-phosphate aminotransferase subfamily. Homodimer. Pyridoxal 5'-phosphate is required as a cofactor.

It catalyses the reaction L-histidinol phosphate + 2-oxoglutarate = 3-(imidazol-4-yl)-2-oxopropyl phosphate + L-glutamate. It participates in amino-acid biosynthesis; L-histidine biosynthesis; L-histidine from 5-phospho-alpha-D-ribose 1-diphosphate: step 7/9. This Chlorobium phaeovibrioides (strain DSM 265 / 1930) (Prosthecochloris vibrioformis (strain DSM 265)) protein is Histidinol-phosphate aminotransferase.